Reading from the N-terminus, the 331-residue chain is Junctional sarcoplasmic reticulum protein 1 (331 aa).

Disordered regions lie at residues Met1–Pro118 and Arg157–Asp331. Residues Met3–Pro76 form a mediates interaction with CACNA1S region. Basic and acidic residues-rich tracts occupy residues Leu21–Ala35 and Thr61–Ala71. Composition is skewed to pro residues over residues Pro103 to Ala112 and Pro161 to Pro175. Composition is skewed to basic and acidic residues over residues Ala222–Glu242 and Pro250–Lys302. The span at Ser320–Asp331 shows a compositional bias: basic residues.

As to quaternary structure, interacts with CACNA1S, CACNB1 and calsequestrin.

The protein resides in the sarcoplasmic reticulum membrane. It is found in the endoplasmic reticulum membrane. Involved in skeletal muscle excitation/contraction coupling (EC), probably acting as a regulator of the voltage-sensitive calcium channel CACNA1S. EC is a physiological process whereby an electrical signal (depolarization of the plasma membrane) is converted into a chemical signal, a calcium gradient, by the opening of ryanodine receptor calcium release channels. May regulate CACNA1S membrane targeting and activity. The sequence is that of Junctional sarcoplasmic reticulum protein 1 (JSRP1) from Homo sapiens (Human).